The chain runs to 304 residues: 17-beta-hydroxysteroid dehydrogenase 13 (304 aa).

The first 19 residues, 1–19 (MNLILEFLLLVGVIIYSYL), serve as a signal peptide directing secretion. Serine 33 carries the post-translational modification Phosphoserine. Residue 40–67 (LITGAGHGIGRLTAYEFAKQKSRLVLWD) coordinates NAD(+). Position 79 is an N6-acetyllysine (lysine 79). Residue serine 172 coordinates substrate. Tyrosine 185 acts as the Proton acceptor in catalysis. Lysine 189 serves as a coordination point for NAD(+). A disordered region spans residues 276 to 304 (SSKHPHGGSQQPVTPIPGDLTPSSDFLKH).

The protein belongs to the short-chain dehydrogenases/reductases (SDR) family. Expressed predominantly in the liver (at protein level).

The protein resides in the lipid droplet. Its subcellular location is the endoplasmic reticulum. The catalysed reaction is 17beta-estradiol + NAD(+) = estrone + NADH + H(+). The enzyme catalyses all-trans-retinol + NAD(+) = all-trans-retinal + NADH + H(+). It catalyses the reaction all-trans-retinal + NAD(+) + H2O = all-trans-retinoate + NADH + 2 H(+). In terms of biological role, plays a pivotal role in hepatic lipid metabolism. In vitro, it catalyzes the oxidation of a variety of lipid substrates, including 17beta-estradiol, retinol, retinal, and leukotriene B4. The polypeptide is 17-beta-hydroxysteroid dehydrogenase 13 (Hsd17b13) (Mus musculus (Mouse)).